Consider the following 212-residue polypeptide: Peptide methionine sulfoxide reductase MsrA (212 aa).

Cys-51 is a catalytic residue.

The protein belongs to the MsrA Met sulfoxide reductase family.

It catalyses the reaction L-methionyl-[protein] + [thioredoxin]-disulfide + H2O = L-methionyl-(S)-S-oxide-[protein] + [thioredoxin]-dithiol. It carries out the reaction [thioredoxin]-disulfide + L-methionine + H2O = L-methionine (S)-S-oxide + [thioredoxin]-dithiol. Functionally, has an important function as a repair enzyme for proteins that have been inactivated by oxidation. Catalyzes the reversible oxidation-reduction of methionine sulfoxide in proteins to methionine. The polypeptide is Peptide methionine sulfoxide reductase MsrA (Vibrio cholerae serotype O1 (strain ATCC 39541 / Classical Ogawa 395 / O395)).